Here is a 181-residue protein sequence, read N- to C-terminus: CASP-like protein 1F1 (181 aa).

The Cytoplasmic portion of the chain corresponds to 1-18 (MPNNEAKFSVNQPLKTQK). The chain crosses the membrane as a helical span at residues 19–39 (LFIGVQIFFRIVAIAASVASS). The Extracellular segment spans residues 40-70 (WLMITSKQVIDIGGIVLDARYSYSPEFKFLA). The chain crosses the membrane as a helical span at residues 71-91 (FTNIVVGCFSLLSLLFLVLVV). Over 92 to 100 (RQGSNPNHY) the chain is Cytoplasmic. Residues 101 to 121 (FFLFLHDLAMMSLVVGGCAAA) traverse the membrane as a helical segment. The Extracellular segment spans residues 122–152 (TTVGFLGKHGNSHTGWMQICDNFGKFCNRAQ). The helical transmembrane segment at 153–173 (TSVTISYLNLICLSILTITSA) threads the bilayer. Residues 174-181 (SKSRKMEA) lie on the Cytoplasmic side of the membrane.

The protein belongs to the Casparian strip membrane proteins (CASP) family. Homodimer and heterodimers.

The protein resides in the cell membrane. This chain is CASP-like protein 1F1, found in Populus trichocarpa (Western balsam poplar).